A 293-amino-acid polypeptide reads, in one-letter code: Bifunctional protein FolD (293 aa).

NADP(+)-binding positions include 165-167, Thr192, and Val233; that span reads GRG.

The protein belongs to the tetrahydrofolate dehydrogenase/cyclohydrolase family. As to quaternary structure, homodimer.

The enzyme catalyses (6R)-5,10-methylene-5,6,7,8-tetrahydrofolate + NADP(+) = (6R)-5,10-methenyltetrahydrofolate + NADPH. The catalysed reaction is (6R)-5,10-methenyltetrahydrofolate + H2O = (6R)-10-formyltetrahydrofolate + H(+). The protein operates within one-carbon metabolism; tetrahydrofolate interconversion. Its function is as follows. Catalyzes the oxidation of 5,10-methylenetetrahydrofolate to 5,10-methenyltetrahydrofolate and then the hydrolysis of 5,10-methenyltetrahydrofolate to 10-formyltetrahydrofolate. The sequence is that of Bifunctional protein FolD from Streptomyces griseus subsp. griseus (strain JCM 4626 / CBS 651.72 / NBRC 13350 / KCC S-0626 / ISP 5235).